The sequence spans 212 residues: Large ribosomal subunit protein uL3 (212 aa).

Positions 127–153 (FRGGPATHGQSDRHRAPGSIGSGTTPG) are disordered.

It belongs to the universal ribosomal protein uL3 family. Part of the 50S ribosomal subunit. Forms a cluster with proteins L14 and L19.

Functionally, one of the primary rRNA binding proteins, it binds directly near the 3'-end of the 23S rRNA, where it nucleates assembly of the 50S subunit. The polypeptide is Large ribosomal subunit protein uL3 (Herpetosiphon aurantiacus (strain ATCC 23779 / DSM 785 / 114-95)).